Reading from the N-terminus, the 314-residue chain is tRNA pseudouridine synthase B (314 aa).

Residue histidine 43 coordinates substrate. Aspartate 48 functions as the Nucleophile in the catalytic mechanism. Substrate-binding residues include tyrosine 76, tyrosine 179, and leucine 200.

Belongs to the pseudouridine synthase TruB family. Type 1 subfamily.

The enzyme catalyses uridine(55) in tRNA = pseudouridine(55) in tRNA. Responsible for synthesis of pseudouridine from uracil-55 in the psi GC loop of transfer RNAs. This is tRNA pseudouridine synthase B from Salmonella paratyphi A (strain ATCC 9150 / SARB42).